Consider the following 315-residue polypeptide: Homoserine kinase (315 aa).

97–107 (PPARGLGSSAT) serves as a coordination point for ATP.

This sequence belongs to the GHMP kinase family. Homoserine kinase subfamily.

The protein resides in the cytoplasm. It carries out the reaction L-homoserine + ATP = O-phospho-L-homoserine + ADP + H(+). It participates in amino-acid biosynthesis; L-threonine biosynthesis; L-threonine from L-aspartate: step 4/5. Catalyzes the ATP-dependent phosphorylation of L-homoserine to L-homoserine phosphate. The sequence is that of Homoserine kinase from Prochlorococcus marinus subsp. pastoris (strain CCMP1986 / NIES-2087 / MED4).